A 128-amino-acid polypeptide reads, in one-letter code: MIVRTLDECRNSERRIVSDNWESTRMLLKDDNMGFSFHITTIYEATETHIHYQNHLESVYCMSGEGEIEVVGGETYPIKPGTLYILDKHDEHYLRAYKYKEMVMACVFNPPITGAEVHDENGVYPLVD.

Belongs to the ectoine synthase family.

The catalysed reaction is (2S)-4-acetamido-2-aminobutanoate = L-ectoine + H2O. The protein operates within amine and polyamine biosynthesis; ectoine biosynthesis; L-ectoine from L-aspartate 4-semialdehyde: step 3/3. Its function is as follows. Catalyzes the circularization of gamma-N-acetyl-alpha,gamma-diaminobutyric acid (ADABA) to ectoine (1,4,5,6-tetrahydro-2-methyl-4-pyrimidine carboxylic acid), which is an excellent osmoprotectant. The chain is L-ectoine synthase from Vibrio atlanticus (strain LGP32) (Vibrio splendidus (strain Mel32)).